The sequence spans 88 residues: Small cysteine-rich outer membrane protein OmcA (88 aa).

The first 18 residues, 1–18 (MKKTALLAALCSVVSLSS), serve as a signal peptide directing secretion. C19 carries N-palmitoyl cysteine lipidation. Residue C19 is the site of S-diacylglycerol cysteine attachment.

As to quaternary structure, part of a disulfide cross-linked outer membrane complex (COMC) composed of the major outer membrane porin (MOMP), the small cysteine-rich protein (OmcA) and the large cysteine-rich periplasmic protein (OmcB).

It is found in the cell outer membrane. Functionally, in elementary bodies (EBs, the infectious stage, which is able to survive outside the host cell) provides the structural integrity of the outer envelope through disulfide cross-links with the large cysteine-rich periplasmic protein and the major outer membrane porin. It has been described in publications as the Sarkosyl-insoluble COMC (Chlamydia outer membrane complex), and serves as the functional equivalent of peptidoglycan. The protein is Small cysteine-rich outer membrane protein OmcA (omcA) of Chlamydia trachomatis serovar B (strain Jali20/OT).